Consider the following 185-residue polypeptide: Monooxygenase hypC (185 aa).

3 helical membrane passes run 35-55 (TGTF…PVIL), 75-95 (GHIQ…YAAY), and 106-126 (PFAV…VFMA). Residue Asn129 is glycosylated (N-linked (GlcNAc...) asparagine). Residues 165-185 (ALFPLSGAVLGLLSTCKIVSF) traverse the membrane as a helical segment.

This sequence belongs to the anthrone oxygenase family.

Its subcellular location is the membrane. It functions in the pathway mycotoxin biosynthesis. Its function is as follows. Monooxygenase; part of the fragmented gene cluster that mediates the biosynthesis of dothistromin (DOTH), a polyketide toxin very similar in structure to the aflatoxin precursor, versicolorin B. The first step of the pathway is the conversion of acetate to norsolorinic acid (NOR) and requires the fatty acid synthase subunits hexA and hexB, as well as the polyketide synthase pksA. PksA combines a hexanoyl starter unit and 7 malonyl-CoA extender units to synthesize the precursor NOR. The hexanoyl starter unit is provided to the acyl-carrier protein (ACP) domain by the fungal fatty acid synthase hexA/hexB. The second step is the conversion of NOR to averantin (AVN) and requires the norsolorinic acid ketoreductase nor1, which catalyzes the dehydration of norsolorinic acid to form (1'S)-averantin. The cytochrome P450 monooxygenase avnA then catalyzes the hydroxylation of AVN to 5'hydroxyaverantin (HAVN). The next step is performed by adhA that transforms HAVN to averufin (AVF). Averufin might then be converted to hydroxyversicolorone by cypX and avfA. Hydroxyversicolorone is further converted versiconal hemiacetal acetate (VHA) by moxY. VHA is then the substrate for the versiconal hemiacetal acetate esterase est1 to yield versiconal (VAL). Versicolorin B synthase vbsA then converts VAL to versicolorin B (VERB) by closing the bisfuran ring. Then, the activity of the versicolorin B desaturase verB leads to versicolorin A (VERA). DotB, a predicted chloroperoxidase, may perform epoxidation of the A-ring of VERA. Alternatively, a cytochrome P450, such as cypX or avnA could catalyze this step. It is also possible that another, uncharacterized, cytochrome P450 enzyme is responsible for this step. Opening of the epoxide could potentially be achieved by the epoxide hydrolase epoA. However, epoA seems not to be required for DOTH biosynthesis, but other epoxide hydrolases may have the ability to complement this hydrolysis. Alternatively, opening of the epoxide ring could be achieved non-enzymatically. The next step is the deoxygenation of ring A to yield the 5,8-dihydroxyanthraquinone which is most likely catalyzed by the NADPH dehydrogenase encoded by ver1. The last stages of DOTH biosynthesis are proposed to involve hydroxylation of the bisfuran. OrdB and norB might have oxidative roles here. An alternative possibility is that cytochrome P450 monoogenases such as avnA and cypX might perform these steps in addition to previously proposed steps. The polypeptide is Monooxygenase hypC (Dothistroma septosporum (strain NZE10 / CBS 128990) (Red band needle blight fungus)).